Reading from the N-terminus, the 292-residue chain is Protein LRATD1 (292 aa).

S38 is modified (phosphoserine). Residues 133–228 form the LRAT domain; that stretch reads PATEQPAPAP…CRFGKREFKA (96 aa).

It belongs to the LRATD family.

Its subcellular location is the cytoplasm. May play a role in cell morphology and motility. In Mus musculus (Mouse), this protein is Protein LRATD1.